Consider the following 71-residue polypeptide: Conotoxin ba5b (71 aa).

Residues 1 to 19 (MLCLPVFITLLLLVSPSAA) form the signal peptide. Residues 20–52 (LPVESELQRDLTQDSPKDFRIREPLLLSKMFDR) constitute a propeptide that is removed on maturation. 2 disulfides stabilise this stretch: C54/C63 and C55/C64. Position 64 is a cysteine amide (C64). Positions 66–71 (RYQRGS) are excised as a propeptide.

This sequence belongs to the conotoxin T superfamily. Expressed by the venom duct.

The protein localises to the secreted. In Conus bayani (Bayan's cone), this protein is Conotoxin ba5b.